A 377-amino-acid polypeptide reads, in one-letter code: Guanine nucleotide-binding protein subunit beta (377 aa).

WD repeat units follow at residues 63–93 (GHTGKVYSLDWTPEKNRIVSASQDGRLIVWN), 105–135 (LPCAWVMTCAFSPSGQSVACGGLDSACSIFN), 154–185 (GHKGYVSSCQYVPDEDTHLITSSGDQTCVLWD), 202–233 (GHTADVLSVSISSSNPKLFVSGSCDTTARLWD), 246–276 (GHESDVNTVKFFPDGNRFGTGSDDGSCRLFD), 293–323 (GDIPHVTSMAFSISGRLLFVGYSNGDCYVWD), and 339–369 (SHEGRISCLGLSADGSALCTGSWDTNLKIWA).

Belongs to the WD repeat G protein beta family. As to quaternary structure, g proteins are composed of 3 units, alpha, beta and gamma.

Its function is as follows. Guanine nucleotide-binding proteins (G proteins) are involved as a modulator or transducer in various transmembrane signaling systems. The beta and gamma chains are required for the GTPase activity, for replacement of GDP by GTP, and for G protein-effector interaction. This Solanum tuberosum (Potato) protein is Guanine nucleotide-binding protein subunit beta (GB1).